Here is a 65-residue protein sequence, read N- to C-terminus: Large ribosomal subunit protein bL35 (65 aa).

Positions M1–S15 are enriched in basic residues. The interval M1 to S21 is disordered.

The protein belongs to the bacterial ribosomal protein bL35 family.

The protein is Large ribosomal subunit protein bL35 of Dechloromonas aromatica (strain RCB).